We begin with the raw amino-acid sequence, 252 residues long: MNILLTNDDGIEAEGINTLAELLSKYHNVTMVAPENQRSASSHSITIYEPIIVKQVKKPYNVEAYSISGTPADCVRVALDKLVPDNIDMVISGINKGLNIGNDILYSGTVSAAIEGSMYKVPSMAVSAQFIKNKKENYKIAAKYALDMLNRLKKEDLKNDVVLNLNIPFCSEEEIKGIKVCKVGNKIFNTRFSEEIDEEGNKILKLEGDINEDIYDGTDVYYIRNKYVTLTPLHYDLTNFNILEETEQLFLS.

Residues Asp-8, Asp-9, Ser-39, and Asn-95 each contribute to the a divalent metal cation site.

Belongs to the SurE nucleotidase family. The cofactor is a divalent metal cation.

Its subcellular location is the cytoplasm. The enzyme catalyses a ribonucleoside 5'-phosphate + H2O = a ribonucleoside + phosphate. Functionally, nucleotidase that shows phosphatase activity on nucleoside 5'-monophosphates. The protein is 5'-nucleotidase SurE of Clostridium botulinum (strain 657 / Type Ba4).